The following is a 314-amino-acid chain: tRNA dimethylallyltransferase (314 aa).

10-17 (GPTGVGKT) serves as a coordination point for ATP. 12 to 17 (TGVGKT) is a binding site for substrate. Residues 35–38 (DSMQ) are interaction with substrate tRNA.

It belongs to the IPP transferase family. As to quaternary structure, monomer. Mg(2+) serves as cofactor.

It carries out the reaction adenosine(37) in tRNA + dimethylallyl diphosphate = N(6)-dimethylallyladenosine(37) in tRNA + diphosphate. Functionally, catalyzes the transfer of a dimethylallyl group onto the adenine at position 37 in tRNAs that read codons beginning with uridine, leading to the formation of N6-(dimethylallyl)adenosine (i(6)A). This chain is tRNA dimethylallyltransferase, found in Finegoldia magna (strain ATCC 29328 / DSM 20472 / WAL 2508) (Peptostreptococcus magnus).